We begin with the raw amino-acid sequence, 155 residues long: Small ribosomal subunit protein uS7 (155 aa).

The protein belongs to the universal ribosomal protein uS7 family. Part of the 30S ribosomal subunit. Contacts proteins S9 and S11.

Functionally, one of the primary rRNA binding proteins, it binds directly to 16S rRNA where it nucleates assembly of the head domain of the 30S subunit. Is located at the subunit interface close to the decoding center, probably blocks exit of the E-site tRNA. The protein is Small ribosomal subunit protein uS7 of Thermosipho melanesiensis (strain DSM 12029 / CIP 104789 / BI429).